The sequence spans 537 residues: Oviduct-specific glycoprotein (537 aa).

Positions 1 to 18 are cleaved as a signal peptide; sequence LLLCVGLLLVLKHHDGAA. In terms of domain architecture, GH18 spans 19–382; the sequence is HKLVCYFTNW…HTLNNLLVND (364 aa). Cys-23 and Cys-48 are disulfide-bonded. Chitin-binding positions include 68–69, 95–98, Tyr-139, 208–211, and Trp-352; these read PQ, GGWN, and LSYD. Asn-399 carries an N-linked (GlcNAc...) asparagine glycan. 2 disordered regions span residues 446 to 475 and 498 to 537; these read EIAT…GEKP and TGQK…ERRL. A compositionally biased stretch (basic and acidic residues) spans 528–537; it reads GRAETLERRL.

The protein belongs to the glycosyl hydrolase 18 family. As to expression, oviduct.

It is found in the cytoplasmic vesicle. The protein localises to the secretory vesicle. In terms of biological role, binds to oocyte zona pellucida in vivo. May play a role in the fertilization process and/or early embryonic development. This is Oviduct-specific glycoprotein (OVGP1) from Bos taurus (Bovine).